Consider the following 124-residue polypeptide: Fluoride-specific ion channel FluC (124 aa).

Helical transmembrane passes span 5–25 (VYIALLGALGCLCRYFLSGFV), 32–52 (SFPYGTLAVNLIGAFLIGLIM), 67–87 (FAITIGFLGGLTTFSTFSFET), and 96–116 (LLIAIVNVLVSVVACLTCTWI). The Na(+) site is built by Gly-75 and Thr-78.

Belongs to the fluoride channel Fluc/FEX (TC 1.A.43) family.

It is found in the cell inner membrane. The enzyme catalyses fluoride(in) = fluoride(out). Its activity is regulated as follows. Na(+) is not transported, but it plays an essential structural role and its presence is essential for fluoride channel function. Its function is as follows. Fluoride-specific ion channel. Important for reducing fluoride concentration in the cell, thus reducing its toxicity. In Citrifermentans bemidjiense (strain ATCC BAA-1014 / DSM 16622 / JCM 12645 / Bem) (Geobacter bemidjiensis), this protein is Fluoride-specific ion channel FluC.